The following is a 385-amino-acid chain: Acetate kinase (385 aa).

Asparagine 9 serves as a coordination point for Mg(2+). Lysine 16 serves as a coordination point for ATP. Arginine 87 serves as a coordination point for substrate. The active-site Proton donor/acceptor is the aspartate 144. ATP-binding positions include 202 to 206 (HLGSG) and 277 to 279 (DIR). A Mg(2+)-binding site is contributed by glutamate 373.

The protein belongs to the acetokinase family. Homodimer. It depends on Mg(2+) as a cofactor. Mn(2+) is required as a cofactor.

It localises to the cytoplasm. It catalyses the reaction acetate + ATP = acetyl phosphate + ADP. It participates in metabolic intermediate biosynthesis; acetyl-CoA biosynthesis; acetyl-CoA from acetate: step 1/2. In terms of biological role, catalyzes the formation of acetyl phosphate from acetate and ATP. Can also catalyze the reverse reaction. The chain is Acetate kinase from Rickettsia akari (strain Hartford).